Here is a 173-residue protein sequence, read N- to C-terminus: MSSGNETVLIGKVSATHGVRGQLRITPFSGDVDSLLTLRSIMVKKPGGEMEIFAVAASKAHGKKVIITLKAFDNINQVLHLVGRELYALREQLPELPEDEYYWCDLLGLQVVTEEGESLGELVDIIVTGSNDVYVVQGSGREILIPALADVVLDVDSDAKRMTVSLPEGLLDL.

Residues 98-170 (EDEYYWCDLL…RMTVSLPEGL (73 aa)) form the PRC barrel domain.

It belongs to the RimM family. In terms of assembly, binds ribosomal protein uS19.

It localises to the cytoplasm. In terms of biological role, an accessory protein needed during the final step in the assembly of 30S ribosomal subunit, possibly for assembly of the head region. Essential for efficient processing of 16S rRNA. May be needed both before and after RbfA during the maturation of 16S rRNA. It has affinity for free ribosomal 30S subunits but not for 70S ribosomes. In Geotalea uraniireducens (strain Rf4) (Geobacter uraniireducens), this protein is Ribosome maturation factor RimM.